The following is a 361-amino-acid chain: 5-formaminoimidazole-4-carboxamide-1-(beta)-D-ribofuranosyl 5'-monophosphate synthetase (361 aa).

Residues H27 and S94 each coordinate 5-amino-1-(5-phospho-beta-D-ribosyl)imidazole-4-carboxamide. In terms of domain architecture, ATP-grasp spans R116–K348. ATP contacts are provided by residues P146 to C208 and E230. Residue N258 coordinates 5-amino-1-(5-phospho-beta-D-ribosyl)imidazole-4-carboxamide. Residues Q297 and E310 each coordinate Mg(2+).

The protein belongs to the phosphohexose mutase family. The cofactor is Mg(2+). Mn(2+) is required as a cofactor.

The enzyme catalyses 5-amino-1-(5-phospho-beta-D-ribosyl)imidazole-4-carboxamide + formate + ATP = 5-formamido-1-(5-phospho-D-ribosyl)imidazole-4-carboxamide + ADP + phosphate. Its pathway is purine metabolism; IMP biosynthesis via de novo pathway; 5-formamido-1-(5-phospho-D-ribosyl)imidazole-4-carboxamide from 5-amino-1-(5-phospho-D-ribosyl)imidazole-4-carboxamide (formate route): step 1/1. In terms of biological role, catalyzes the ATP- and formate-dependent formylation of 5-aminoimidazole-4-carboxamide-1-beta-d-ribofuranosyl 5'-monophosphate (AICAR) to 5-formaminoimidazole-4-carboxamide-1-beta-d-ribofuranosyl 5'-monophosphate (FAICAR) in the absence of folates. In Methanococcus maripaludis (strain C6 / ATCC BAA-1332), this protein is 5-formaminoimidazole-4-carboxamide-1-(beta)-D-ribofuranosyl 5'-monophosphate synthetase.